The following is a 250-amino-acid chain: MIAWLDPHDPFPPVERALGPATEAPGLLAASRDLSPQRLLLAYRQGIFPWYSVGQPVLWWSTDPRMVLAPQALKISATFRKTLRRVLRDPDWEIRVDDDFLAVMRACAMTPREGQDGTWITREIIAAYGALHSNGMAHSVETWYRGTRVGGLYGVALGRMFYGESMFAHRTDASKIALAALCAFLGSHGVPMIDCQQETDHLASLGARPIARAEFLAHVRNASAQPAITPWWFDKSVLERWTATPATPAV.

This sequence belongs to the L/F-transferase family.

Its subcellular location is the cytoplasm. The enzyme catalyses N-terminal L-lysyl-[protein] + L-leucyl-tRNA(Leu) = N-terminal L-leucyl-L-lysyl-[protein] + tRNA(Leu) + H(+). It catalyses the reaction N-terminal L-arginyl-[protein] + L-leucyl-tRNA(Leu) = N-terminal L-leucyl-L-arginyl-[protein] + tRNA(Leu) + H(+). It carries out the reaction L-phenylalanyl-tRNA(Phe) + an N-terminal L-alpha-aminoacyl-[protein] = an N-terminal L-phenylalanyl-L-alpha-aminoacyl-[protein] + tRNA(Phe). Functions in the N-end rule pathway of protein degradation where it conjugates Leu, Phe and, less efficiently, Met from aminoacyl-tRNAs to the N-termini of proteins containing an N-terminal arginine or lysine. The chain is Leucyl/phenylalanyl-tRNA--protein transferase from Cupriavidus pinatubonensis (strain JMP 134 / LMG 1197) (Cupriavidus necator (strain JMP 134)).